Here is a 174-residue protein sequence, read N- to C-terminus: Dual-action ribosomal maturation protein DarP (174 aa).

It belongs to the DarP family.

The protein resides in the cytoplasm. Its function is as follows. Member of a network of 50S ribosomal subunit biogenesis factors which assembles along the 30S-50S interface, preventing incorrect 23S rRNA structures from forming. Promotes peptidyl transferase center (PTC) maturation. The chain is Dual-action ribosomal maturation protein DarP from Pseudomonas paraeruginosa (strain DSM 24068 / PA7) (Pseudomonas aeruginosa (strain PA7)).